We begin with the raw amino-acid sequence, 612 residues long: Dihydroxy-acid dehydratase (612 aa).

Asp81 lines the Mg(2+) pocket. Cys122 is a [2Fe-2S] cluster binding site. 2 residues coordinate Mg(2+): Asp123 and Lys124. Lys124 is modified (N6-carboxylysine). [2Fe-2S] cluster is bound at residue Cys195. Position 491 (Glu491) interacts with Mg(2+). Residue Ser517 is the Proton acceptor of the active site.

Belongs to the IlvD/Edd family. Homodimer. The cofactor is [2Fe-2S] cluster. Requires Mg(2+) as cofactor.

The catalysed reaction is (2R)-2,3-dihydroxy-3-methylbutanoate = 3-methyl-2-oxobutanoate + H2O. It catalyses the reaction (2R,3R)-2,3-dihydroxy-3-methylpentanoate = (S)-3-methyl-2-oxopentanoate + H2O. Its pathway is amino-acid biosynthesis; L-isoleucine biosynthesis; L-isoleucine from 2-oxobutanoate: step 3/4. It participates in amino-acid biosynthesis; L-valine biosynthesis; L-valine from pyruvate: step 3/4. In terms of biological role, functions in the biosynthesis of branched-chain amino acids. Catalyzes the dehydration of (2R,3R)-2,3-dihydroxy-3-methylpentanoate (2,3-dihydroxy-3-methylvalerate) into 2-oxo-3-methylpentanoate (2-oxo-3-methylvalerate) and of (2R)-2,3-dihydroxy-3-methylbutanoate (2,3-dihydroxyisovalerate) into 2-oxo-3-methylbutanoate (2-oxoisovalerate), the penultimate precursor to L-isoleucine and L-valine, respectively. This is Dihydroxy-acid dehydratase from Rhizobium leguminosarum bv. trifolii (strain WSM2304).